We begin with the raw amino-acid sequence, 96 residues long: MLRLDLQFFSTKKGQGSSKNGRDSESKRLGSKRADGQFVSGGSILYRQRGTKIYPGENVGRGGDDTLFSKIDGVVKFERYGRNRKKVSVYPVAKEA.

Residues 1–9 (MLRLDLQFF) constitute a propeptide that is removed on maturation. Residues 1–36 (MLRLDLQFFSTKKGQGSSKNGRDSESKRLGSKRADG) form a disordered region. The span at 8-19 (FFSTKKGQGSSK) shows a compositional bias: polar residues. Residues 20 to 35 (NGRDSESKRLGSKRAD) show a composition bias toward basic and acidic residues.

This sequence belongs to the bacterial ribosomal protein bL27 family. In terms of processing, the N-terminus is cleaved by ribosomal processing cysteine protease Prp.

The sequence is that of Large ribosomal subunit protein bL27 from Oceanobacillus iheyensis (strain DSM 14371 / CIP 107618 / JCM 11309 / KCTC 3954 / HTE831).